A 317-amino-acid chain; its full sequence is Nuclear distribution protein nudE homolog (317 aa).

A coiled-coil region spans residues 29–180 (TDVKQEYDEF…LKQELNVKSR (152 aa)). Residues 186 to 205 (NGTSVPTANDTNTVNSSMNS) are disordered.

The protein belongs to the nudE family.

It is found in the cytoplasm. Its subcellular location is the cytoskeleton. The protein localises to the microtubule organizing center. It localises to the centrosome. The protein resides in the spindle. Chaperone protein with functions in nuclear localization. Required for centrosome duplication and formation and function of the mitotic spindle. In postmitotic neurons, acts with nudC downstream of dar1 to ensure correct positioning of the nuclei in primary dendrites and as a consequence, is required for determining multipolar neuron morphology. The chain is Nuclear distribution protein nudE homolog from Drosophila melanogaster (Fruit fly).